The primary structure comprises 670 residues: DUF724 domain-containing protein 1 (670 aa).

2 disordered regions span residues 283-315 (HNGPQQKPVKESPSNAIKQKPMCSSSGARPMTP) and 368-445 (ANAE…NNDD). Polar residues-rich tracts occupy residues 294–309 (SPSNAIKQKPMCSSSG), 379–392 (RNQNCLRNDSTQQM), and 426–442 (CNGSESEISNTGKSICN). Residues 484–669 (PFAKKLPFWK…LEFQTTVSTP (186 aa)) enclose the DUF724 domain.

In terms of tissue distribution, expressed in stems and flowers.

It localises to the nucleus. Functionally, may be involved in the polar growth of plant cells via transportation of RNAs. In Arabidopsis thaliana (Mouse-ear cress), this protein is DUF724 domain-containing protein 1.